A 142-amino-acid chain; its full sequence is Hemoglobin subunit alpha (142 aa).

The Globin domain occupies 2–142 (VLSAADKGNV…VSTVLTSKYR (141 aa)). The residue at position 4 (serine 4) is a Phosphoserine. An N6-succinyllysine mark is found at lysine 8 and lysine 12. Lysine 17 is modified (N6-acetyllysine; alternate). N6-succinyllysine; alternate is present on lysine 17. Position 25 is a phosphotyrosine (tyrosine 25). Residue serine 36 is modified to Phosphoserine. Residue lysine 41 is modified to N6-succinyllysine. Position 50 is a phosphoserine (serine 50). Histidine 59 lines the O2 pocket. Histidine 88 is a binding site for heme b. Serine 103 is subject to Phosphoserine. Threonine 109 carries the phosphothreonine modification. Serine 125 carries the post-translational modification Phosphoserine. Residues threonine 135 and threonine 138 each carry the phosphothreonine modification. A Phosphoserine modification is found at serine 139.

This sequence belongs to the globin family. In terms of assembly, heterotetramer of two alpha chains and two beta chains. In terms of tissue distribution, red blood cells.

Its function is as follows. Involved in oxygen transport from the lung to the various peripheral tissues. Functionally, hemopressin acts as an antagonist peptide of the cannabinoid receptor CNR1. Hemopressin-binding efficiently blocks cannabinoid receptor CNR1 and subsequent signaling. The chain is Hemoglobin subunit alpha (HBA) from Bos gaurus frontalis (Domestic gayal).